A 268-amino-acid polypeptide reads, in one-letter code: Putative carbamate hydrolase RutD (268 aa).

One can recognise an AB hydrolase-1 domain in the interval 24 to 243 (VILSAGLGGS…NATLDIAPWG (220 aa)).

This sequence belongs to the AB hydrolase superfamily. Hydrolase RutD family.

The enzyme catalyses carbamate + 2 H(+) = NH4(+) + CO2. In terms of biological role, involved in pyrimidine catabolism. May facilitate the hydrolysis of carbamate, a reaction that can also occur spontaneously. The polypeptide is Putative carbamate hydrolase RutD (Caulobacter sp. (strain K31)).